A 260-amino-acid polypeptide reads, in one-letter code: Pyridoxine 5'-phosphate synthase (260 aa).

2 residues coordinate 3-amino-2-oxopropyl phosphate: Asn-7 and Arg-18. His-43 serves as the catalytic Proton acceptor. 1-deoxy-D-xylulose 5-phosphate contacts are provided by Arg-45 and His-50. The active-site Proton acceptor is the Glu-83. Thr-113 serves as a coordination point for 1-deoxy-D-xylulose 5-phosphate. His-208 functions as the Proton donor in the catalytic mechanism. Residues Asp-209 and 230–231 contribute to the 3-amino-2-oxopropyl phosphate site; that span reads GH.

It belongs to the PNP synthase family. Homooctamer; tetramer of dimers.

It localises to the cytoplasm. The catalysed reaction is 3-amino-2-oxopropyl phosphate + 1-deoxy-D-xylulose 5-phosphate = pyridoxine 5'-phosphate + phosphate + 2 H2O + H(+). The protein operates within cofactor biosynthesis; pyridoxine 5'-phosphate biosynthesis; pyridoxine 5'-phosphate from D-erythrose 4-phosphate: step 5/5. In terms of biological role, catalyzes the complicated ring closure reaction between the two acyclic compounds 1-deoxy-D-xylulose-5-phosphate (DXP) and 3-amino-2-oxopropyl phosphate (1-amino-acetone-3-phosphate or AAP) to form pyridoxine 5'-phosphate (PNP) and inorganic phosphate. The polypeptide is Pyridoxine 5'-phosphate synthase (Leptospira biflexa serovar Patoc (strain Patoc 1 / Ames)).